Here is a 146-residue protein sequence, read N- to C-terminus: Leptin (146 aa).

Cys-96 and Cys-146 are disulfide-bonded.

This sequence belongs to the leptin family.

It is found in the secreted. Functionally, key player in the regulation of energy balance and body weight control. Once released into the circulation, has central and peripheral effects by binding LEPR, found in many tissues, which results in the activation of several major signaling pathways. In the hypothalamus, acts as an appetite-regulating factor that induces a decrease in food intake and an increase in energy consumption by inducing anorexinogenic factors and suppressing orexigenic neuropeptides, also regulates bone mass and secretion of hypothalamo-pituitary-adrenal hormones. In the periphery, increases basal metabolism, influences reproductive function, regulates pancreatic beta-cell function and insulin secretion, is pro-angiogenic for endothelial cell and affects innate and adaptive immunity. In the arcuate nucleus of the hypothalamus, activates by depolarization POMC neurons inducing FOS and SOCS3 expression to release anorexigenic peptides and inhibits by hyperpolarization NPY neurons inducing SOCS3 with a consequent reduction on release of orexigenic peptides. In addition to its known satiety inducing effect, has a modulatory role in nutrient absorption. In the intestine, reduces glucose absorption by enterocytes by activating PKC and leading to a sequential activation of p38, PI3K and ERK signaling pathways which exerts an inhibitory effect on glucose absorption. Acts as a growth factor on certain tissues, through the activation of different signaling pathways increases expression of genes involved in cell cycle regulation such as CCND1, via JAK2-STAT3 pathway, or VEGFA, via MAPK1/3 and PI3K-AKT1 pathways. May also play an apoptotic role via JAK2-STAT3 pathway and up-regulation of BIRC5 expression. Pro-angiogenic, has mitogenic activity on vascular endothelial cells and plays a role in matrix remodeling by regulating the expression of matrix metalloproteinases (MMPs) and tissue inhibitors of metalloproteinases (TIMPs). In innate immunity, modulates the activity and function of neutrophils by increasing chemotaxis and the secretion of oxygen radicals. Increases phagocytosis by macrophages and enhances secretion of pro-inflammatory mediators. Increases cytotoxic ability of NK cells. Plays a pro-inflammatory role, in synergy with IL1B, by inducing NOS2 which promotes the production of IL6, IL8 and Prostaglandin E2, through a signaling pathway that involves JAK2, PI3K, MAP2K1/MEK1 and MAPK14/p38. In adaptive immunity, promotes the switch of memory T-cells towards T helper-1 cell immune responses. Increases CD4(+)CD25(-) T-cell proliferation and reduces autophagy during TCR (T-cell receptor) stimulation, through MTOR signaling pathway activation and BCL2 up-regulation. The sequence is that of Leptin (LEP) from Pan troglodytes (Chimpanzee).